A 223-amino-acid polypeptide reads, in one-letter code: Adapter protein MecA (223 aa).

It belongs to the MecA family. Homodimer.

Enables the recognition and targeting of unfolded and aggregated proteins to the ClpC protease or to other proteins involved in proteolysis. This chain is Adapter protein MecA, found in Limosilactobacillus reuteri (strain DSM 20016) (Lactobacillus reuteri).